A 404-amino-acid chain; its full sequence is Alanyl-tRNA editing protein AlaX-L (404 aa).

Positions 104, 108, 202, and 206 each coordinate Zn(2+).

The protein belongs to the class-II aminoacyl-tRNA synthetase family. Editing domain AlaX-L subfamily. It depends on Zn(2+) as a cofactor.

It localises to the cytoplasm. Functions in trans to edit the amino acid moiety from mischarged charged tRNA(Ala). This is Alanyl-tRNA editing protein AlaX-L (alaXL) from Pyrococcus horikoshii (strain ATCC 700860 / DSM 12428 / JCM 9974 / NBRC 100139 / OT-3).